The primary structure comprises 724 residues: Catalase-peroxidase (724 aa).

Positions 98–226 form a cross-link, tryptophyl-tyrosyl-methioninium (Trp-Tyr) (with M-252); sequence WHAAGTYRIA…LAAVMMGLIY (129 aa). The active-site Proton acceptor is His-99. Residues 226-252 constitute a cross-link (tryptophyl-tyrosyl-methioninium (Tyr-Met) (with W-98)); sequence YVNPEGVDGNPDPLKTAHDIRVTFERM. His-267 lines the heme b pocket.

Belongs to the peroxidase family. Peroxidase/catalase subfamily. In terms of assembly, homodimer or homotetramer. Requires heme b as cofactor. Post-translationally, formation of the three residue Trp-Tyr-Met cross-link is important for the catalase, but not the peroxidase activity of the enzyme.

The enzyme catalyses H2O2 + AH2 = A + 2 H2O. It carries out the reaction 2 H2O2 = O2 + 2 H2O. Its function is as follows. Bifunctional enzyme with both catalase and broad-spectrum peroxidase activity. The chain is Catalase-peroxidase from Psychromonas ingrahamii (strain DSM 17664 / CCUG 51855 / 37).